The primary structure comprises 261 residues: Cytochrome c oxidase subunit 3 (261 aa).

Over 1–15 (MTHQTHAYHMVNPSP) the chain is Mitochondrial matrix. The chain crosses the membrane as a helical span at residues 16–34 (WPLTGALSALLMTSGLAMW). At 35 to 40 (FHFNST) the chain is on the mitochondrial intermembrane side. The chain crosses the membrane as a helical span at residues 41–66 (ILLMIGLTTNTLTMYQWWRDVIREST). Topologically, residues 67-72 (FQGHHT) are mitochondrial matrix. The helical transmembrane segment at 73–105 (PTVQKGLRYGMILFIISEVLFFTGFFWAFYHSS) threads the bilayer. The Mitochondrial intermembrane segment spans residues 106–128 (LAPTPELGGCWPPTGIHPLNPLE). The helical transmembrane segment at 129-152 (VPLLNTSVLLASGVSITWAHHSLM) threads the bilayer. At 153 to 155 (EGN) the chain is on the mitochondrial matrix side. A helical membrane pass occupies residues 156 to 183 (RYPMLQALFITIALGVYFTLLQASEYYE). Over 184 to 190 (APFTISD) the chain is Mitochondrial intermembrane. The helical transmembrane segment at 191–223 (GIYGSTFFVATGFHGLHVIIGSTFLIVCFFRQL) threads the bilayer. At 224-232 (KFHFTSNHH) the chain is on the mitochondrial matrix side. The chain crosses the membrane as a helical span at residues 233–256 (FGFEAAAWYWHFVDVVWLFLYVSI). The Mitochondrial intermembrane segment spans residues 257 to 261 (YWWGS).

It belongs to the cytochrome c oxidase subunit 3 family. Component of the cytochrome c oxidase (complex IV, CIV), a multisubunit enzyme composed of 14 subunits. The complex is composed of a catalytic core of 3 subunits MT-CO1, MT-CO2 and MT-CO3, encoded in the mitochondrial DNA, and 11 supernumerary subunits COX4I, COX5A, COX5B, COX6A, COX6B, COX6C, COX7A, COX7B, COX7C, COX8 and NDUFA4, which are encoded in the nuclear genome. The complex exists as a monomer or a dimer and forms supercomplexes (SCs) in the inner mitochondrial membrane with NADH-ubiquinone oxidoreductase (complex I, CI) and ubiquinol-cytochrome c oxidoreductase (cytochrome b-c1 complex, complex III, CIII), resulting in different assemblies (supercomplex SCI(1)III(2)IV(1) and megacomplex MCI(2)III(2)IV(2)).

Its subcellular location is the mitochondrion inner membrane. It carries out the reaction 4 Fe(II)-[cytochrome c] + O2 + 8 H(+)(in) = 4 Fe(III)-[cytochrome c] + 2 H2O + 4 H(+)(out). Functionally, component of the cytochrome c oxidase, the last enzyme in the mitochondrial electron transport chain which drives oxidative phosphorylation. The respiratory chain contains 3 multisubunit complexes succinate dehydrogenase (complex II, CII), ubiquinol-cytochrome c oxidoreductase (cytochrome b-c1 complex, complex III, CIII) and cytochrome c oxidase (complex IV, CIV), that cooperate to transfer electrons derived from NADH and succinate to molecular oxygen, creating an electrochemical gradient over the inner membrane that drives transmembrane transport and the ATP synthase. Cytochrome c oxidase is the component of the respiratory chain that catalyzes the reduction of oxygen to water. Electrons originating from reduced cytochrome c in the intermembrane space (IMS) are transferred via the dinuclear copper A center (CU(A)) of subunit 2 and heme A of subunit 1 to the active site in subunit 1, a binuclear center (BNC) formed by heme A3 and copper B (CU(B)). The BNC reduces molecular oxygen to 2 water molecules using 4 electrons from cytochrome c in the IMS and 4 protons from the mitochondrial matrix. This chain is Cytochrome c oxidase subunit 3 (MT-CO3), found in Raphicerus melanotis (Cape grysbok).